Reading from the N-terminus, the 185-residue chain is UPF0149 protein XF_2010 (185 aa).

This sequence belongs to the UPF0149 family.

This is UPF0149 protein XF_2010 from Xylella fastidiosa (strain 9a5c).